The sequence spans 690 residues: Eukaryotic translation initiation factor 3 subunit B (690 aa).

Residues 1–11 (MAKKKSEEHSG) are compositionally biased toward basic and acidic residues. Positions 1–36 (MAKKKSEEHSGADANDSDYQEEPNFEDPPGFVDNIS) are disordered. Over residues 15–25 (NDSDYQEEPNF) the composition is skewed to acidic residues. The region spanning 57–141 (SVVVVDNIPK…HTFAVNLFTD (85 aa)) is the RRM domain. 5 WD repeats span residues 207–246 (TRER…KIQK), 293–331 (DGMS…LLDL), 334–369 (IKIP…TLME), 442–484 (EIRE…KPSL), and 530–575 (PDHF…IKRT). A coiled-coil region spans residues 595–645 (EEKQKEIKKNLKKYYAAFEQKDRLRLTRASKELLEKRSQLRETFMEYRNKR).

The protein belongs to the eIF-3 subunit B family. Component of the eukaryotic translation initiation factor 3 (eIF-3) complex. The eIF-3 complex interacts with pix. Interacts with mxt.

The protein resides in the cytoplasm. In terms of biological role, RNA-binding component of the eukaryotic translation initiation factor 3 (eIF-3) complex, which is involved in protein synthesis of a specialized repertoire of mRNAs and, together with other initiation factors, stimulates binding of mRNA and methionyl-tRNAi to the 40S ribosome. The eIF-3 complex specifically targets and initiates translation of a subset of mRNAs involved in cell proliferation. The polypeptide is Eukaryotic translation initiation factor 3 subunit B (Drosophila erecta (Fruit fly)).